The sequence spans 458 residues: Argininosuccinate lyase (458 aa).

The protein belongs to the lyase 1 family. Argininosuccinate lyase subfamily.

The protein resides in the cytoplasm. The enzyme catalyses 2-(N(omega)-L-arginino)succinate = fumarate + L-arginine. The protein operates within amino-acid biosynthesis; L-arginine biosynthesis; L-arginine from L-ornithine and carbamoyl phosphate: step 3/3. The sequence is that of Argininosuccinate lyase from Pelobacter propionicus (strain DSM 2379 / NBRC 103807 / OttBd1).